The sequence spans 388 residues: Cytochrome b (388 aa).

4 helical membrane passes run 32–52 (FGSL…TLAM), 76–98 (WLIR…LHVG), 113–133 (TWTI…LGYV), and 179–199 (FFAL…MHLI). Heme b is bound by residues His-82 and His-96. Positions 183 and 197 each coordinate heme b. Residue His-202 participates in a ubiquinone binding. Transmembrane regions (helical) follow at residues 226 to 246 (FIFK…IFIF), 290 to 310 (LLGV…PITD), 322 to 342 (LSKI…QLGA), and 349 to 369 (FIEF…IIVP).

It belongs to the cytochrome b family. As to quaternary structure, fungal cytochrome b-c1 complex contains 10 subunits; 3 respiratory subunits, 2 core proteins and 5 low-molecular weight proteins. Cytochrome b-c1 complex is a homodimer. Requires heme b as cofactor.

The protein resides in the mitochondrion inner membrane. Its function is as follows. Component of the ubiquinol-cytochrome c reductase complex (complex III or cytochrome b-c1 complex) that is part of the mitochondrial respiratory chain. The b-c1 complex mediates electron transfer from ubiquinol to cytochrome c. Contributes to the generation of a proton gradient across the mitochondrial membrane that is then used for ATP synthesis. The protein is Cytochrome b (cob) of Zymoseptoria tritici (Speckled leaf blotch fungus).